The sequence spans 557 residues: Cytochrome P450 monooxygenase FSL4 (557 aa).

The next 2 membrane-spanning stretches (helical) occupy residues 6-26 (LWLV…IFLL) and 32-52 (IVVC…YWTV). Residues N127 and N393 are each glycosylated (N-linked (GlcNAc...) asparagine). C494 is a heme binding site.

Belongs to the cytochrome P450 family. Heme serves as cofactor.

It localises to the membrane. It participates in secondary metabolite biosynthesis. In terms of biological role, cytochrome P450 monooxygenase; part of the gene cluster that mediates the biosynthesis of fusarielins F, G and H, decaketide compounds with 5 methylations and a decaline core that act as mycoestrogens as they stimulate growth of MCF-7 breast cancer cells. The initial compound in the pathway is produced by the reducing polyketide synthase FSL1. FSL1 lacks an active enoyl reductase (ER) domain and biosynthesis of fusarielins relies on the trans-acting enoyl reductase FSL5, before it is released through hydrolysis catalyzed by the thioesterase FSL2. Fusarielins F, G, and H have a C11=C12 cis double bond and is fully reduced between C10 and C11 and between C12 and C13. FSL3 can be involved in the formation of the C11=C12 cis double bond by moving a hypothetical C10=C11 or C12=C13 trans double bond to form prefusarielin. Prefusarielin is oxygenated at C15 and C16 by FSL4, resulting in fusarielin F, which subsequently is epoxidized into fusarielin G by the same enzyme. The final step in the pathway is a reduction of the carboxylic acid moiety to yield fusarielin H via a still undetermined mechanism. In Gibberella zeae (strain ATCC MYA-4620 / CBS 123657 / FGSC 9075 / NRRL 31084 / PH-1) (Wheat head blight fungus), this protein is Cytochrome P450 monooxygenase FSL4.